The chain runs to 512 residues: Choline-sulfatase (512 aa).

Residues Asp14, Gln15, and Cys54 each contribute to the Ca(2+) site. Cys54 serves as the catalytic Nucleophile. Cys54 carries the 3-oxoalanine (Cys) modification. His104 is a catalytic residue. Asp296 and His297 together coordinate Ca(2+).

This sequence belongs to the sulfatase family. Ca(2+) serves as cofactor. The conversion to 3-oxoalanine (also known as C-formylglycine, FGly), of a serine or cysteine residue in prokaryotes and of a cysteine residue in eukaryotes, is critical for catalytic activity.

It carries out the reaction choline sulfate + H2O = choline + sulfate + H(+). It participates in amine and polyamine biosynthesis; choline biosynthesis; choline from choline sulfate: step 1/1. In terms of biological role, converts choline-O-sulfate into choline. This chain is Choline-sulfatase (betC), found in Rhizobium meliloti (strain 1021) (Ensifer meliloti).